Consider the following 332-residue polypeptide: Putative threonine dehydratase (332 aa).

Lysine 56 bears the N6-(pyridoxal phosphate)lysine mark.

Belongs to the serine/threonine dehydratase family. Pyridoxal 5'-phosphate serves as cofactor.

It catalyses the reaction L-threonine = 2-oxobutanoate + NH4(+). Its pathway is amino-acid biosynthesis; L-isoleucine biosynthesis; 2-oxobutanoate from L-threonine: step 1/1. In Sinorhizobium fredii (strain NBRC 101917 / NGR234), this protein is Putative threonine dehydratase.